The primary structure comprises 1387 residues: Regulator of G-protein signaling 12 (1387 aa).

Residues 21 to 97 (SVEVARGRAG…GVLRMVISEG (77 aa)) form the PDZ domain. Phosphoserine is present on residues Ser-171 and Ser-194. Residue Lys-195 forms a Glycyl lysine isopeptide (Lys-Gly) (interchain with G-Cter in SUMO2) linkage. The PID domain maps to 227-339 (VAMVVGYLGS…GALRTSCHVF (113 aa)). Disordered stretches follow at residues 409–428 (ADAH…IGNF) and 442–488 (LGGG…PLET). Over residues 412-428 (HQNNSTSSNSDSGIGNF) the composition is skewed to polar residues. Arg-524 and Arg-633 each carry omega-N-methylarginine. Residues 620–650 (RKTKEDKKSSKLGRGVALAQTSQRTSARRSF) form a disordered region. Ser-661 and Ser-671 each carry phosphoserine. In terms of domain architecture, RGS spans 715-832 (SFERLLQDPV…LKSQLYQECV (118 aa)). Positions 842–934 (PDSQQVPSSP…ANGGLCRRES (93 aa)) are disordered. A compositionally biased stretch (low complexity) spans 849–869 (SSPASKHSISSDHSNVSTPKK). Phosphoserine is present on residues Ser-850 and Ser-879. The span at 914–923 (DHGDHAHDAL) shows a compositional bias: basic and acidic residues. A Phosphoserine modification is found at Ser-943. RBD domains are found at residues 962–1032 (KHCC…LGKR) and 1034–1104 (LFRL…LEER). The span at 1103-1117 (ERDPSRGKVSTEKQK) shows a compositional bias: basic and acidic residues. Residues 1103–1168 (ERDPSRGKVS…ARDPRLSKRE (66 aa)) form a disordered region. Residues 1122–1133 (KQSSAVNSSPRN) show a composition bias toward polar residues. Residues 1151-1168 (IRGENGKSARDPRLSKRE) show a composition bias toward basic and acidic residues. The 23-residue stretch at 1187–1209 (AEEFFELISKAQSNRADDQRGLL) folds into the GoLoco domain. Disordered regions lie at residues 1224–1325 (PGSS…EGTT) and 1349–1387 (ADLT…TSRF). A compositionally biased stretch (low complexity) spans 1261–1280 (SDSPATSPASAQSPCSAYSP). Positions 1315-1325 (SCISTVQEGTT) are enriched in polar residues. Over residues 1367-1380 (LPPPPLPQDTPGPT) the composition is skewed to pro residues.

In terms of assembly, interacts with GNAI1, GNAI2 and GNAI3; the interactions are GDP-dependent. As to expression, detected in brain cortex GABAergic neurons, in striatum and substantia nigra, and in the Purkinje cell layer in the cerebellum and hippocampus (at protein level). Expressed at high levels in brain and lung and lower levels in testis, heart, and spleen.

The protein localises to the nucleus. Its subcellular location is the cytoplasm. It localises to the cell projection. The protein resides in the dendrite. It is found in the synapse. Functionally, regulates G protein-coupled receptor signaling cascades. Inhibits signal transduction by increasing the GTPase activity of G protein alpha subunits, thereby driving them into their inactive GDP-bound form. The sequence is that of Regulator of G-protein signaling 12 (Rgs12) from Rattus norvegicus (Rat).